The primary structure comprises 426 residues: uncharacterized protein (426 aa).

Belongs to the serpin family.

This is an uncharacterized protein from Methanosarcina acetivorans (strain ATCC 35395 / DSM 2834 / JCM 12185 / C2A).